A 331-amino-acid polypeptide reads, in one-letter code: ABSCISIC ACID-INSENSITIVE 5-like protein 1 (331 aa).

Phosphoserine is present on residues Ser-40 and Ser-98. Thr-143 carries the phosphothreonine modification. Residues 247 to 310 form the bZIP domain; sequence MERRQRRMIK…RQEIISRSKQ (64 aa). Residues 249 to 268 form a basic motif region; the sequence is RRQRRMIKNRESAARSRARR. The segment at 275-289 is leucine-zipper; that stretch reads LELELNNLTEENTKL. Basic and acidic residues predominate over residues 296–320; the sequence is NEKKRRQEIISRSKQVTKEKSGDKL. Residues 296-331 are disordered; the sequence is NEKKRRQEIISRSKQVTKEKSGDKLRKIRRMASAGW.

The protein belongs to the bZIP family. ABI5 subfamily. DNA-binding heterodimer with AREB3/DPBF3 or EEL/DPBF4. Interacts with the AFP proteins AFP1, AFP2 and AFP3. As to expression, predominantly expressed in seeds.

The protein localises to the nucleus. In terms of biological role, could participate in abscisic acid-regulated gene expression during seed development. In Arabidopsis thaliana (Mouse-ear cress), this protein is ABSCISIC ACID-INSENSITIVE 5-like protein 1 (DPBF2).